A 110-amino-acid chain; its full sequence is Red pigment-concentrating prohormone (110 aa).

A signal peptide spans 1–25 (MVRRTGVTLLVVALVVVALVSSVSA). Glutamine 26 bears the Pyrrolidone carboxylic acid mark. A Tryptophan amide modification is found at tryptophan 33.

This sequence belongs to the AKH/HRTH/RPCH family.

It localises to the secreted. Functionally, this hormone adapts the animal to light backgrounds by stimulating concentration of the pigment of its red body-chromatophores. The protein is Red pigment-concentrating prohormone of Carcinus maenas (Common shore crab).